The following is a 110-amino-acid chain: UPF0060 membrane protein Rpic_4131 (110 aa).

A run of 4 helical transmembrane segments spans residues 8-28 (VLFA…WLVL), 33-53 (PFWL…LLTL), 65-85 (YGGV…GVAL), and 88-108 (WDVG…LQPQ).

This sequence belongs to the UPF0060 family.

Its subcellular location is the cell inner membrane. This Ralstonia pickettii (strain 12J) protein is UPF0060 membrane protein Rpic_4131.